The primary structure comprises 85 residues: U4-theraphotoxin-Hhn1c (85 aa).

The first 22 residues, 1–22, serve as a signal peptide directing secretion; the sequence is MKVTLIAILTCAAVLVLHTTAA. A propeptide spanning residues 23-48 is cleaved from the precursor; the sequence is EELEAESQLMEVGMPDTELAAVDEER. 3 cysteine pairs are disulfide-bonded: C52-C66, C56-C77, and C71-C82.

It belongs to the neurotoxin 12 (Hwtx-2) family. 02 (Hwtx-2) subfamily. In terms of tissue distribution, expressed by the venom gland.

The protein localises to the secreted. In terms of biological role, postsynaptic neurotoxin. The sequence is that of U4-theraphotoxin-Hhn1c from Cyriopagopus hainanus (Chinese bird spider).